The chain runs to 133 residues: Glycine cleavage system H protein (133 aa).

One can recognise a Lipoyl-binding domain in the interval 30–112 (TITVGITHHA…YGAGWFFKIK (83 aa)). Lys-71 carries the post-translational modification N6-lipoyllysine.

It belongs to the GcvH family. In terms of assembly, the glycine cleavage system is composed of four proteins: P, T, L and H. The cofactor is (R)-lipoate.

In terms of biological role, the glycine cleavage system catalyzes the degradation of glycine. The H protein shuttles the methylamine group of glycine from the P protein to the T protein. This Neisseria gonorrhoeae (strain ATCC 700825 / FA 1090) protein is Glycine cleavage system H protein.